Consider the following 49-residue polypeptide: Large ribosomal subunit protein bL33A (49 aa).

A disordered region spans residues 20–49; sequence KKNKRNNPDRVEFKKYCPRDKKSTLHRETK. Positions 25-49 are enriched in basic and acidic residues; sequence NNPDRVEFKKYCPRDKKSTLHRETK.

The protein belongs to the bacterial ribosomal protein bL33 family. In terms of assembly, part of the 50S ribosomal subunit. Interacts with VmlR.

The chain is Large ribosomal subunit protein bL33A (rpmGA) from Bacillus subtilis (strain 168).